A 570-amino-acid chain; its full sequence is Urease subunit alpha (570 aa).

Residues 135–570 (GGLDIHVHFN…ELPLAQRYHL (436 aa)) enclose the Urease domain. 3 residues coordinate Ni(2+): histidine 140, histidine 142, and lysine 219. Position 219 is an N6-carboxylysine (lysine 219). Histidine 221 is a binding site for substrate. Ni(2+)-binding residues include histidine 248 and histidine 274. The active-site Proton donor is the histidine 322. Residue aspartate 362 coordinates Ni(2+).

It belongs to the metallo-dependent hydrolases superfamily. Urease alpha subunit family. In terms of assembly, heterotrimer of UreA (gamma), UreB (beta) and UreC (alpha) subunits. Three heterotrimers associate to form the active enzyme. Ni cation serves as cofactor. Carboxylation allows a single lysine to coordinate two nickel ions.

The protein resides in the cytoplasm. The enzyme catalyses urea + 2 H2O + H(+) = hydrogencarbonate + 2 NH4(+). Its pathway is nitrogen metabolism; urea degradation; CO(2) and NH(3) from urea (urease route): step 1/1. The protein is Urease subunit alpha of Natronomonas pharaonis (strain ATCC 35678 / DSM 2160 / CIP 103997 / JCM 8858 / NBRC 14720 / NCIMB 2260 / Gabara) (Halobacterium pharaonis).